A 116-amino-acid polypeptide reads, in one-letter code: Large ribosomal subunit protein bL17 (116 aa).

The protein belongs to the bacterial ribosomal protein bL17 family. In terms of assembly, part of the 50S ribosomal subunit. Contacts protein L32.

This is Large ribosomal subunit protein bL17 from Prochlorococcus marinus (strain MIT 9312).